A 303-amino-acid chain; its full sequence is Ribonuclease P protein subunit p40 (303 aa).

As to quaternary structure, component of nuclear RNase P and RNase MRP ribonucleoproteins. RNase P consists of a catalytic RNA moiety and about 10 protein subunits; POP1, POP4, POP5, POP7, RPP14, RPP21, RPP25, RPP30, RPP38 and RPP40. Within the RNase P complex, POP1, POP7 and RPP25 form the 'finger' subcomplex, POP5, RPP14, RPP40 and homodimeric RPP30 form the 'palm' subcomplex, and RPP21, POP4 and RPP38 form the 'wrist' subcomplex. All subunits of the RNase P complex interact with the catalytic RNA. Several subunits of RNase P are also part of the RNase MRP complex. RNase MRP consists of a catalytic RNA moiety and about 8 protein subunits; POP1, POP7, RPP25, RPP30, RPP38, RPP40 and possibly also POP4 and POP5.

It localises to the nucleus. The protein resides in the nucleolus. Its function is as follows. Component of ribonuclease P, a ribonucleoprotein complex that generates mature tRNA molecules by cleaving their 5'-ends. Also a component of the MRP ribonuclease complex, which cleaves pre-rRNA sequences. The protein is Ribonuclease P protein subunit p40 (RPP40) of Bos taurus (Bovine).